The primary structure comprises 582 residues: A-type ATP synthase subunit A 1 (582 aa).

231–238 is a binding site for ATP; sequence GPFGSGKT.

Belongs to the ATPase alpha/beta chains family. In terms of assembly, has multiple subunits with at least A(3), B(3), C, D, E, F, H, I and proteolipid K(x).

Its subcellular location is the cell membrane. The catalysed reaction is ATP + H2O + 4 H(+)(in) = ADP + phosphate + 5 H(+)(out). Component of the A-type ATP synthase that produces ATP from ADP in the presence of a proton gradient across the membrane. The A chain is the catalytic subunit. This chain is A-type ATP synthase subunit A 1, found in Methanospirillum hungatei JF-1 (strain ATCC 27890 / DSM 864 / NBRC 100397 / JF-1).